A 619-amino-acid polypeptide reads, in one-letter code: Xyloglucan galactosyltransferase MUR3 (619 aa).

A disordered region spans residues 1-26 (MFPRVSMRRRSAEVSPTEPMEKGNGK). Residues 1-33 (MFPRVSMRRRSAEVSPTEPMEKGNGKNQTNRIC) are Cytoplasmic-facing. A helical; Signal-anchor for type II membrane protein membrane pass occupies residues 34 to 54 (LLVALSLFFWALLLYFHFVVL). Over 55–619 (GTSNIDKQLQ…WKSEQRDKTQ (565 aa)) the chain is Lumenal. N-linked (GlcNAc...) asparagine glycosylation is found at Asn116, Asn146, Asn231, Asn257, Asn319, Asn465, and Asn482. The disordered stretch occupies residues 576–619 (HVWDPFFSKPKPGEDGSSDGNGGTTISADAAKNSWKSEQRDKTQ). Residues 610–619 (WKSEQRDKTQ) are compositionally biased toward basic and acidic residues.

The protein belongs to the glycosyltransferase 47 family. Interacts with CSLC4 and FUT1. In terms of tissue distribution, ubiquitous.

The protein resides in the golgi apparatus. The protein localises to the golgi stack membrane. It is found in the golgi apparatus membrane. In terms of biological role, involved in the attachment of the Gal residue on the third xylosyl unit within the XXXG core structure of xyloglucan, the principal glycan that interlaces the cellulose microfibrils in plant cell wall. Associates with other xyloglucan-synthesizing enzymes to form multiprotein complexes for xyloglucan synthesis in the Golgi. Interacts with actin and is required for the proper endomembrane organization and for the cell elongation. Not involved in the trafficking from the endoplasmic reticulum to the vacuoles. Involved in salt stress tolerance. Participates in the control of the expression of genes encoding for proteins involved in reactive oxygen species (ROS) detoxification under salt stress. May contribute to the maintenance of the proper organization of actin microfilaments during salt stress-induced ROS production. This is Xyloglucan galactosyltransferase MUR3 from Arabidopsis thaliana (Mouse-ear cress).